The primary structure comprises 697 residues: Elongation factor G 2 (697 aa).

The region spanning 5–280 is the tr-type G domain; sequence SKYRNIGIFA…AVVDYLPAPD (276 aa). Residues 14–21, 78–82, and 132–135 contribute to the GTP site; these read AHVDAGKT, DTPGH, and NKLD.

It belongs to the TRAFAC class translation factor GTPase superfamily. Classic translation factor GTPase family. EF-G/EF-2 subfamily.

It is found in the cytoplasm. Catalyzes the GTP-dependent ribosomal translocation step during translation elongation. During this step, the ribosome changes from the pre-translocational (PRE) to the post-translocational (POST) state as the newly formed A-site-bound peptidyl-tRNA and P-site-bound deacylated tRNA move to the P and E sites, respectively. Catalyzes the coordinated movement of the two tRNA molecules, the mRNA and conformational changes in the ribosome. The chain is Elongation factor G 2 from Shewanella sp. (strain MR-7).